Reading from the N-terminus, the 534-residue chain is CTP synthase (534 aa).

Residues 1–267 (MSKYIVVTGG…GSYILNRLNI (267 aa)) form an amidoligase domain region. S13 contacts CTP. Residue S13 coordinates UTP. 14–19 (SIGKGI) is a binding site for ATP. L-glutamine is bound at residue Y54. ATP is bound at residue D71. Mg(2+) is bound by residues D71 and E141. CTP is bound by residues 148-150 (DIE), 188-193 (KTKPTQ), and K224. Residues 188–193 (KTKPTQ) and K224 contribute to the UTP site. Residues 294–532 (KIAVVGKYIE…IKAAKNKKQN (239 aa)) form the Glutamine amidotransferase type-1 domain. An L-glutamine-binding site is contributed by G353. C380 serves as the catalytic Nucleophile; for glutamine hydrolysis. L-glutamine is bound by residues 381–384 (LGLH), E403, and R460. Active-site residues include H505 and E507.

Belongs to the CTP synthase family. Homotetramer.

The enzyme catalyses UTP + L-glutamine + ATP + H2O = CTP + L-glutamate + ADP + phosphate + 2 H(+). It catalyses the reaction L-glutamine + H2O = L-glutamate + NH4(+). The catalysed reaction is UTP + NH4(+) + ATP = CTP + ADP + phosphate + 2 H(+). The protein operates within pyrimidine metabolism; CTP biosynthesis via de novo pathway; CTP from UDP: step 2/2. With respect to regulation, allosterically activated by GTP, when glutamine is the substrate; GTP has no effect on the reaction when ammonia is the substrate. The allosteric effector GTP functions by stabilizing the protein conformation that binds the tetrahedral intermediate(s) formed during glutamine hydrolysis. Inhibited by the product CTP, via allosteric rather than competitive inhibition. Functionally, catalyzes the ATP-dependent amination of UTP to CTP with either L-glutamine or ammonia as the source of nitrogen. Regulates intracellular CTP levels through interactions with the four ribonucleotide triphosphates. This Methanosphaera stadtmanae (strain ATCC 43021 / DSM 3091 / JCM 11832 / MCB-3) protein is CTP synthase.